The chain runs to 88 residues: MIKNAFISFQEQKEESKGSVEFQVFSFTNKIRRLTSHLELHRKDYLSQRGLRKILGKRQRLLAYLSKKNRVRYKELINQLNIRELKTR.

This sequence belongs to the universal ribosomal protein uS15 family. Part of the 30S ribosomal subunit.

It is found in the plastid. It localises to the chloroplast. This chain is Small ribosomal subunit protein uS15c (rps15), found in Barbarea verna (Land cress).